We begin with the raw amino-acid sequence, 358 residues long: MSTGQSEDHLPISAAEAERLFAPFADSGVLTLAVSGGPDSMALMWLAARWRATRAGGPRLLAVTVDHGLRPESRREALMVKQLARQLGLTHRTLRWSGEKPAAGIPEAARIARYRLLARAAEQAGASHVVTAHTRDDQAETVLMRLLRGSGIAGLAAMAPVSRRDGLLLARPLLSLSKARLLATLRSAGIAFADDPTNRDPAFTRPRLRALMPTLAAEGADPRTLATLANRARRANAAIELMADGAERYLALLAAGRSSKRRGGEGEMFDPRAFAALPAEIRLRLLMRAIDRVGTEGPVELGKAEALLERLDRTLAGITDGGTAERGTLKQTLAGALVSLAKDAIRISPAPPRRRRGE.

Residue serine 35–serine 40 coordinates ATP.

Belongs to the tRNA(Ile)-lysidine synthase family.

The protein localises to the cytoplasm. It catalyses the reaction cytidine(34) in tRNA(Ile2) + L-lysine + ATP = lysidine(34) in tRNA(Ile2) + AMP + diphosphate + H(+). Ligates lysine onto the cytidine present at position 34 of the AUA codon-specific tRNA(Ile) that contains the anticodon CAU, in an ATP-dependent manner. Cytidine is converted to lysidine, thus changing the amino acid specificity of the tRNA from methionine to isoleucine. The polypeptide is tRNA(Ile)-lysidine synthase (Bradyrhizobium sp. (strain BTAi1 / ATCC BAA-1182)).